The primary structure comprises 94 residues: MSRSVSKGPFVDLHLVNKVLSARQNNDKKPIKTWSRRSTILPDFIGLTISVHNGRQHVPVFVTENMVGHKLGEFSHTRTFKGHAGDKKAAGSKR.

Residues 75-94 (SHTRTFKGHAGDKKAAGSKR) are disordered. Residues 83–94 (HAGDKKAAGSKR) are compositionally biased toward basic and acidic residues.

This sequence belongs to the universal ribosomal protein uS19 family.

In terms of biological role, protein S19 forms a complex with S13 that binds strongly to the 16S ribosomal RNA. In Nitrosomonas europaea (strain ATCC 19718 / CIP 103999 / KCTC 2705 / NBRC 14298), this protein is Small ribosomal subunit protein uS19.